The following is a 475-amino-acid chain: Cytosolic enolase 3 (475 aa).

Position 2 is an N-acetylserine (Ser2). Substrate-binding residues include His200 and Glu209. The Proton donor role is filled by Asp252. Residues Asp287, Glu336, and Asp361 each contribute to the Mg(2+) site. Residues Glu336 and Asp361 each coordinate substrate. Residue Lys386 is the Proton acceptor of the active site. Substrate is bound by residues 413–416 and Lys437; that span reads SHRC.

The protein belongs to the enolase family. In terms of assembly, homodimer. It depends on Mg(2+) as a cofactor.

The protein localises to the cytoplasm. It is found in the nucleus. The catalysed reaction is (2R)-2-phosphoglycerate = phosphoenolpyruvate + H2O. It participates in carbohydrate degradation; glycolysis; pyruvate from D-glyceraldehyde 3-phosphate: step 4/5. This chain is Cytosolic enolase 3 (ENO3), found in Arabidopsis thaliana (Mouse-ear cress).